The chain runs to 178 residues: ATP synthase subunit b (178 aa).

A helical membrane pass occupies residues 30–50 (FFFVLAIFLIVLAVIGTFVVP).

It belongs to the ATPase B chain family. As to quaternary structure, F-type ATPases have 2 components, F(1) - the catalytic core - and F(0) - the membrane proton channel. F(1) has five subunits: alpha(3), beta(3), gamma(1), delta(1), epsilon(1). F(0) has three main subunits: a(1), b(2) and c(10-14). The alpha and beta chains form an alternating ring which encloses part of the gamma chain. F(1) is attached to F(0) by a central stalk formed by the gamma and epsilon chains, while a peripheral stalk is formed by the delta and b chains.

The protein localises to the cell membrane. Functionally, f(1)F(0) ATP synthase produces ATP from ADP in the presence of a proton or sodium gradient. F-type ATPases consist of two structural domains, F(1) containing the extramembraneous catalytic core and F(0) containing the membrane proton channel, linked together by a central stalk and a peripheral stalk. During catalysis, ATP synthesis in the catalytic domain of F(1) is coupled via a rotary mechanism of the central stalk subunits to proton translocation. In terms of biological role, component of the F(0) channel, it forms part of the peripheral stalk, linking F(1) to F(0). The sequence is that of ATP synthase subunit b from Mycobacterium avium (strain 104).